A 470-amino-acid polypeptide reads, in one-letter code: Glutamyl-tRNA(Gln) amidotransferase subunit A (470 aa).

Catalysis depends on charge relay system residues lysine 71 and serine 146. Catalysis depends on serine 170, which acts as the Acyl-ester intermediate.

Belongs to the amidase family. GatA subfamily. Heterotrimer of A, B and C subunits.

It catalyses the reaction L-glutamyl-tRNA(Gln) + L-glutamine + ATP + H2O = L-glutaminyl-tRNA(Gln) + L-glutamate + ADP + phosphate + H(+). Functionally, allows the formation of correctly charged Gln-tRNA(Gln) through the transamidation of misacylated Glu-tRNA(Gln) in organisms which lack glutaminyl-tRNA synthetase. The reaction takes place in the presence of glutamine and ATP through an activated gamma-phospho-Glu-tRNA(Gln). The polypeptide is Glutamyl-tRNA(Gln) amidotransferase subunit A (Akkermansia muciniphila (strain ATCC BAA-835 / DSM 22959 / JCM 33894 / BCRC 81048 / CCUG 64013 / CIP 107961 / Muc)).